Reading from the N-terminus, the 197-residue chain is Beta-crystallin A2 (197 aa).

The tract at residues 1 to 11 (MSSAPAPGPAP) is N-terminal arm. Beta/gamma crystallin 'Greek key' domains follow at residues 12-52 (ASLT…KVEN) and 53-99 (GVWV…RPVL). The connecting peptide stretch occupies residues 100 to 105 (CANHND). Beta/gamma crystallin 'Greek key' domains lie at 106–147 (SRVT…KVSS) and 148–196 (GAWV…RRVQ).

It belongs to the beta/gamma-crystallin family. As to quaternary structure, homo/heterodimer, or complexes of higher-order. The structure of beta-crystallin oligomers seems to be stabilized through interactions between the N-terminal arms.

Crystallins are the dominant structural components of the vertebrate eye lens. In Homo sapiens (Human), this protein is Beta-crystallin A2 (CRYBA2).